The following is a 154-amino-acid chain: Transcriptional repressor NrdR (154 aa).

Residues 1–22 (MRCPFCAHDDSQVKDSRPTDDG) form a disordered region. A zinc finger spans residues 3-34 (CPFCAHDDSQVKDSRPTDDGAAIRRRRQCEGC). The segment covering 7–22 (AHDDSQVKDSRPTDDG) has biased composition (basic and acidic residues). The region spanning 49 to 139 (MTVVKSDGRR…VYKDFREAKD (91 aa)) is the ATP-cone domain.

The protein belongs to the NrdR family. Zn(2+) is required as a cofactor.

Its function is as follows. Negatively regulates transcription of bacterial ribonucleotide reductase nrd genes and operons by binding to NrdR-boxes. The polypeptide is Transcriptional repressor NrdR (Rhizorhabdus wittichii (strain DSM 6014 / CCUG 31198 / JCM 15750 / NBRC 105917 / EY 4224 / RW1) (Sphingomonas wittichii)).